We begin with the raw amino-acid sequence, 284 residues long: Nucleotide-binding protein PputGB1_0956 (284 aa).

An ATP-binding site is contributed by 8–15; sequence GRSGSGKS. Residue 60-63 participates in GTP binding; sequence DARN.

The protein belongs to the RapZ-like family.

In terms of biological role, displays ATPase and GTPase activities. This Pseudomonas putida (strain GB-1) protein is Nucleotide-binding protein PputGB1_0956.